Here is a 66-residue protein sequence, read N- to C-terminus: Stress-induced protein KIN2 (66 aa).

The segment covering 1-10 (MSETNKNAFQ) has biased composition (polar residues). The tract at residues 1–20 (MSETNKNAFQAGQAAGKAEE) is disordered. 2 repeats span residues 31–35 (DAAAA) and 49–53 (DAAVG).

Interacts with DEK3. As to expression, expressed at high levels in embryos and mature seeds.

The chain is Stress-induced protein KIN2 from Arabidopsis thaliana (Mouse-ear cress).